Reading from the N-terminus, the 302-residue chain is MQPLMEQIRAFRLHLETERNLSPHTLAAYDRDLRQFAAFVAAEMGDSATAEDVDHLLLRRYLAQLGTQIRKSSQGRKLAAIRSFYRHLLRLGSVSRNPAELIATPKREQRLPFHLDIDQATALMETPTEEENYGLRDRAILETLYSSGLRVSELTGLAIRDINLAGGMLRVMGKGGKERIVPLGSRAVRAIQEYLDSRGGGTATAPLFLNSRGDRINRRSVARIVDAHVHEIAAFKHISPHTLRHTFATHMLEGGADLRAIQELLGHASLSTTQKYTHVSLDRLMEVYDKAHPKARTPEPEE.

Residues 2 to 89 (QPLMEQIRAF…AIRSFYRHLL (88 aa)) enclose the Core-binding (CB) domain. Residues 110–289 (RLPFHLDIDQ…SLDRLMEVYD (180 aa)) enclose the Tyr recombinase domain. Active-site residues include arginine 150, lysine 174, histidine 241, arginine 244, and histidine 267. Tyrosine 276 functions as the O-(3'-phospho-DNA)-tyrosine intermediate in the catalytic mechanism.

Belongs to the 'phage' integrase family. XerC subfamily. In terms of assembly, forms a cyclic heterotetrameric complex composed of two molecules of XerC and two molecules of XerD.

The protein localises to the cytoplasm. In terms of biological role, site-specific tyrosine recombinase, which acts by catalyzing the cutting and rejoining of the recombining DNA molecules. The XerC-XerD complex is essential to convert dimers of the bacterial chromosome into monomers to permit their segregation at cell division. It also contributes to the segregational stability of plasmids. The polypeptide is Tyrosine recombinase XerC (Pelobacter propionicus (strain DSM 2379 / NBRC 103807 / OttBd1)).